The primary structure comprises 110 residues: MFGKGGIGNLMKQAQQMQEKMQQMQEEVAKLEVTGESGAGLVKVTINGAHNCRRVEIDPSLLVEDDKEMLEDLIAAALNDAARRIDETQKEKMASVSNGMQLPPGFKMPF.

The segment at 90 to 110 is disordered; sequence KEKMASVSNGMQLPPGFKMPF.

Belongs to the YbaB/EbfC family. In terms of assembly, homodimer.

The protein localises to the cytoplasm. Its subcellular location is the nucleoid. Functionally, binds to DNA and alters its conformation. May be involved in regulation of gene expression, nucleoid organization and DNA protection. This Yersinia pestis bv. Antiqua (strain Angola) protein is Nucleoid-associated protein YpAngola_A2890.